A 156-amino-acid chain; its full sequence is Endogenous retrovirus group K member 21 Pro protein (156 aa).

The Peptidase A2 domain occupies 21 to 96 (FEGLVDTGAD…IPLNLWGRDL (76 aa)). D26 is an active-site residue. The G-patch domain occupies 111 to 156 (YSPTSQKIMTKMGYIPGKGLGKNEDGIKVPVEAKINQKREGIGYPF).

It belongs to the peptidase A2 family. HERV class-II K(HML-2) subfamily. Active as a homodimer. Autoproteolytically processed at the N-terminus. Expected C-terminal autoprocessing not detected. The sequence shown is that of the processed Pro protein.

It carries out the reaction Processing at the authentic HIV-1 PR recognition site and release of the mature p17 matrix and the p24 capsid protein, as a result of the cleavage of the -SQNY-|-PIVQ- cleavage site.. Its function is as follows. Retroviral proteases have roles in the processing of the primary translation products and the maturation of the viral particle. Endogenous Pro proteins may have kept, lost or modified their original function during evolution. This chain is Endogenous retrovirus group K member 21 Pro protein (ERVK-21), found in Homo sapiens (Human).